The primary structure comprises 629 residues: Dehydrogenase pyvF (629 aa).

The signal sequence occupies residues 1–22 (MAGSPFTTALLSAWTLSTVAVG). FAD-binding positions include 61 to 62 (AS) and 82 to 83 (EA). Asn92 is a glycosylation site (N-linked (GlcNAc...) asparagine). 144–147 (NLMA) is an FAD binding site. 6 N-linked (GlcNAc...) asparagine glycosylation sites follow: Asn172, Asn182, Asn256, Asn284, Asn312, and Asn421. His552 serves as the catalytic Proton acceptor. Residues Ala586 and 597 to 598 (PL) contribute to the FAD site.

It belongs to the GMC oxidoreductase family. In terms of assembly, homodimer. FAD serves as cofactor.

It functions in the pathway secondary metabolite biosynthesis. Dehydrogenase; part of the gene cluster that mediates the biosynthesis of pyranoviolin A, a pyranonigrin analog with a C-3 methoxy group. Initially, the PKS portion of pyvA synthesizes C-10 carbon chain from 5 molecules of malonyl-CoA, which is then condensed with the thiolation (T) domain-bound glycine activated by the adenylation (A) domain. The subsequent chain release by Dieckmann condensation (DKC) could be catalyzed by the TE domain present at the C-terminus of pyvA and/or the alpha/beta hydrolase pyvD, installing the tetramic acid moiety. The FAD-dependent monooxygenase pyvC next epoxidizes one of the olefins of the polyketide part, and the epoxide ring-opening induces the dihydro-gamma-pyrone ring formation. The cytochrome P450 monooxygeanse pyvB would be responsible for the 2 consecutive reactions, in which the dihydro-gamma-pyrone is oxidized to gamma-pyrone and C-7 is hydroxylated to yield pyranonigrin F. Finally, the O-methyltransferase pyvH methylates the C-3 hydroxy group to complete the biosynthesis. The polypeptide is Dehydrogenase pyvF (Aspergillus violaceofuscus (strain CBS 115571)).